The chain runs to 222 residues: Large ribosomal subunit protein mL64 (222 aa).

Disordered regions lie at residues 21 to 47 (RSRS…NLLT) and 186 to 222 (QRKR…EPSS). Residues 98–207 (TMQESLRLQQ…KKEARIAAMA (110 aa)) are a coiled coil. Residues 184–200 (KQQRKRLKEERQRQKKE) carry the Nuclear localization signal motif. Residues 186 to 202 (QRKRLKEERQRQKKEAR) show a composition bias toward basic and acidic residues. Residues 203–215 (IAAMASAEAQDSA) are compositionally biased toward low complexity.

This sequence belongs to the mitochondrion-specific ribosomal protein mL64 family. Component of the mitochondrial ribosome large subunit (39S) which comprises a 16S rRNA and about 50 distinct proteins. Interacts with GADD45A, GADD45B and GADD45G. Interacts with NR4A1 via the NR4A1 AB domain. Interacts with ATAD3A and ATAD3B.

The protein localises to the mitochondrion. It is found in the nucleus. In terms of biological role, acts as a negative regulator of G1 to S cell cycle phase progression by inhibiting cyclin-dependent kinases. Inhibitory effects are additive with GADD45 proteins but also occur in the absence of GADD45 proteins. Acts as a repressor of the orphan nuclear receptor NR4A1 by inhibiting AB domain-mediated transcriptional activity. May be involved in the hormone-mediated regulation of NR4A1 transcriptional activity. May play a role in mitochondrial protein synthesis. The polypeptide is Large ribosomal subunit protein mL64 (Gadd45gip1) (Mus musculus (Mouse)).